The following is a 441-amino-acid chain: Dolichyl-diphosphooligosaccharide--protein glycosyltransferase 48 kDa subunit (441 aa).

The first 28 residues, 1–28, serve as a signal peptide directing secretion; that stretch reads MATALSGGFSKNALFILSAALMLQAVLG. Over 29–410 the chain is Lumenal; the sequence is DGKTLVLLDN…TQYERFIPSA (382 aa). The helical transmembrane segment at 411–431 threads the bilayer; that stretch reads FPYYASAFSMMAGLFVFSVVF. Residues 432-441 are Cytoplasmic-facing; that stretch reads LHMREKEKSD.

It belongs to the DDOST 48 kDa subunit family. Component of the oligosaccharyltransferase (OST) complex.

The protein resides in the endoplasmic reticulum membrane. It participates in protein modification; protein glycosylation. Functionally, subunit of the oligosaccharyl transferase (OST) complex that catalyzes the initial transfer of a defined glycan (Glc(3)Man(9)GlcNAc(2) in eukaryotes) from the lipid carrier dolichol-pyrophosphate to an asparagine residue within an Asn-X-Ser/Thr consensus motif in nascent polypeptide chains, the first step in protein N-glycosylation. N-glycosylation occurs cotranslationally and the complex associates with the Sec61 complex at the channel-forming translocon complex that mediates protein translocation across the endoplasmic reticulum (ER). All subunits are required for a maximal enzyme activity. Required for the assembly of both SST3A- and SS3B-containing OST complexes. In Danio rerio (Zebrafish), this protein is Dolichyl-diphosphooligosaccharide--protein glycosyltransferase 48 kDa subunit.